Consider the following 79-residue polypeptide: Major outer membrane lipoprotein Lpp 2 (79 aa).

A signal peptide spans 1–21 (MNRTNKLILGAVVLGSALLAG). The N-palmitoyl cysteine moiety is linked to residue C22. The S-diacylglycerol cysteine moiety is linked to residue C22. Repeats lie at residues 25 to 35 (NAKIDQLSSDV) and 39 to 49 (SAKVDQLSNDV). The stretch at 28–76 (IDQLSSDVQTLSAKVDQLSNDVNAMRSDIQAAKDDAARANQRLDNKVSR) forms a coiled coil. The interval 60–79 (KDDAARANQRLDNKVSRVRK) is disordered. Residue K79 is modified to N6-murein peptidoglycan lysine.

This sequence belongs to the Lpp family. As to quaternary structure, homotrimer.

Its subcellular location is the cell outer membrane. It localises to the secreted. The protein localises to the cell wall. Its function is as follows. A highly abundant outer membrane lipoprotein that controls the distance between the inner and outer membranes. The only protein known to be covalently linked to the peptidoglycan network (PGN). Also non-covalently binds the PGN. The link between the cell outer membrane and PGN contributes to maintenance of the structural and functional integrity of the cell envelope, and maintains the correct distance between the PGN and the outer membrane. This chain is Major outer membrane lipoprotein Lpp 2, found in Salmonella paratyphi A (strain ATCC 9150 / SARB42).